The chain runs to 611 residues: Elongation factor 4 (611 aa).

Residues 11 to 193 (EKIRNFSIIA…QVVEYVPAPS (183 aa)) enclose the tr-type G domain. GTP-binding positions include 23–28 (DHGKST) and 140–143 (NKID).

Belongs to the TRAFAC class translation factor GTPase superfamily. Classic translation factor GTPase family. LepA subfamily.

It is found in the cell membrane. The catalysed reaction is GTP + H2O = GDP + phosphate + H(+). In terms of biological role, required for accurate and efficient protein synthesis under certain stress conditions. May act as a fidelity factor of the translation reaction, by catalyzing a one-codon backward translocation of tRNAs on improperly translocated ribosomes. Back-translocation proceeds from a post-translocation (POST) complex to a pre-translocation (PRE) complex, thus giving elongation factor G a second chance to translocate the tRNAs correctly. Binds to ribosomes in a GTP-dependent manner. This Enterococcus faecalis (strain ATCC 700802 / V583) protein is Elongation factor 4.